We begin with the raw amino-acid sequence, 513 residues long: Probable DNA ligase (513 aa).

Residue Glu213 participates in ATP binding. Catalysis depends on Lys215, which acts as the N6-AMP-lysine intermediate. Positions 220, 235, 264, 304, 376, and 382 each coordinate ATP.

The protein belongs to the ATP-dependent DNA ligase family. It depends on Mg(2+) as a cofactor.

It carries out the reaction ATP + (deoxyribonucleotide)n-3'-hydroxyl + 5'-phospho-(deoxyribonucleotide)m = (deoxyribonucleotide)n+m + AMP + diphosphate.. Its function is as follows. DNA ligase that seals nicks in double-stranded DNA during DNA replication, DNA recombination and DNA repair. This is Probable DNA ligase from Anaeromyxobacter dehalogenans (strain 2CP-C).